A 205-amino-acid polypeptide reads, in one-letter code: MAKRLVEELERDGIVKSERVKRALLTVPREEFVLPEYRMMAYEDRPLPLFAGATISAPHMVAMMCELIEPRPGMKILEVGTGSGYHAAVCAEAIEKKGRIYTIEIVKELAVFAAQNLERLGYWGVVEVYHGDGKKGLEKHAPFDAIIVTAAADVIPPALIRQLKDGGVMVIPVEERLGQVLYKVVKRGDKIEKKAITYVMFVPLR.

The active site involves S56.

It belongs to the methyltransferase superfamily. L-isoaspartyl/D-aspartyl protein methyltransferase family.

The protein localises to the cytoplasm. The enzyme catalyses [protein]-L-isoaspartate + S-adenosyl-L-methionine = [protein]-L-isoaspartate alpha-methyl ester + S-adenosyl-L-homocysteine. In terms of biological role, catalyzes the methyl esterification of L-isoaspartyl residues in peptides and proteins that result from spontaneous decomposition of normal L-aspartyl and L-asparaginyl residues. It plays a role in the repair and/or degradation of damaged proteins. This chain is Protein-L-isoaspartate O-methyltransferase, found in Pyrobaculum aerophilum (strain ATCC 51768 / DSM 7523 / JCM 9630 / CIP 104966 / NBRC 100827 / IM2).